The primary structure comprises 354 residues: Photosystem II protein D1 1 (354 aa).

3 helical membrane-spanning segments follow: residues 29 to 46 (YIGW…TATT), 118 to 133 (HFLI…EWEL), and 142 to 156 (WIAV…AATA). H118 is a chlorophyll a binding site. Residue Y126 coordinates pheophytin a. The [CaMn4O5] cluster site is built by D170 and E189. The chain crosses the membrane as a helical span at residues 197-218 (FHQLGVAGVFGGALFSAMHGSL). A chlorophyll a-binding site is contributed by H198. A quinone-binding positions include H215 and 264-265 (SF). H215 is a binding site for Fe cation. H272 serves as a coordination point for Fe cation. The helical transmembrane segment at 274–288 (FLAAWPVIGIWFTAL) threads the bilayer. The [CaMn4O5] cluster site is built by H332, E333, D342, and A344. The propeptide occupies 345–354 (AVEVAPAIRG).

Belongs to the reaction center PufL/M/PsbA/D family. As to quaternary structure, PSII is composed of 1 copy each of membrane proteins PsbA, PsbB, PsbC, PsbD, PsbE, PsbF, PsbH, PsbI, PsbJ, PsbK, PsbL, PsbM, PsbT, PsbX, PsbY, PsbZ, Psb30/Ycf12, peripheral proteins PsbO, CyanoQ (PsbQ), PsbU, PsbV and a large number of cofactors. It forms dimeric complexes. The D1/D2 heterodimer binds P680, chlorophylls that are the primary electron donor of PSII, and subsequent electron acceptors. It shares a non-heme iron and each subunit binds pheophytin, quinone, additional chlorophylls, carotenoids and lipids. D1 provides most of the ligands for the Mn4-Ca-O5 cluster of the oxygen-evolving complex (OEC). There is also a Cl(-1) ion associated with D1 and D2, which is required for oxygen evolution. The PSII complex binds additional chlorophylls, carotenoids and specific lipids. is required as a cofactor. Post-translationally, tyr-161 forms a radical intermediate that is referred to as redox-active TyrZ, YZ or Y-Z. In terms of processing, C-terminally processed by CtpA; processing is essential to allow assembly of the oxygen-evolving complex and thus photosynthetic growth.

Its subcellular location is the cellular thylakoid membrane. It catalyses the reaction 2 a plastoquinone + 4 hnu + 2 H2O = 2 a plastoquinol + O2. In terms of biological role, photosystem II (PSII) is a light-driven water:plastoquinone oxidoreductase that uses light energy to abstract electrons from H(2)O, generating O(2) and a proton gradient subsequently used for ATP formation. It consists of a core antenna complex that captures photons, and an electron transfer chain that converts photonic excitation into a charge separation. The D1/D2 (PsbA/PsbD) reaction center heterodimer binds P680, the primary electron donor of PSII as well as several subsequent electron acceptors. In Synechococcus sp. (strain JA-3-3Ab) (Cyanobacteria bacterium Yellowstone A-Prime), this protein is Photosystem II protein D1 1.